The primary structure comprises 294 residues: UDP-3-O-acyl-N-acetylglucosamine deacetylase (294 aa).

Zn(2+)-binding residues include H75, H232, and D236. Residue H259 is the Proton donor of the active site.

Belongs to the LpxC family. Zn(2+) is required as a cofactor.

The catalysed reaction is a UDP-3-O-[(3R)-3-hydroxyacyl]-N-acetyl-alpha-D-glucosamine + H2O = a UDP-3-O-[(3R)-3-hydroxyacyl]-alpha-D-glucosamine + acetate. It participates in glycolipid biosynthesis; lipid IV(A) biosynthesis; lipid IV(A) from (3R)-3-hydroxytetradecanoyl-[acyl-carrier-protein] and UDP-N-acetyl-alpha-D-glucosamine: step 2/6. Functionally, catalyzes the hydrolysis of UDP-3-O-myristoyl-N-acetylglucosamine to form UDP-3-O-myristoylglucosamine and acetate, the committed step in lipid A biosynthesis. The polypeptide is UDP-3-O-acyl-N-acetylglucosamine deacetylase (Campylobacter jejuni subsp. jejuni serotype O:6 (strain 81116 / NCTC 11828)).